A 273-amino-acid polypeptide reads, in one-letter code: NAD-dependent protein deacylase (273 aa).

The Deacetylase sirtuin-type domain maps to 20 to 272 (RERLRQRIFF…PEFVEKLLEG (253 aa)). NAD(+) is bound at residue 48 to 67 (GAGISAESGIRTFRAADGLW). The substrate site is built by tyrosine 92 and arginine 95. 129–132 (QNID) is an NAD(+) binding site. Catalysis depends on histidine 147, which acts as the Proton acceptor. The Zn(2+) site is built by cysteine 155 and cysteine 174. NAD(+) is bound by residues 214–216 (GTS), 240–242 (NLE), and alanine 258.

It belongs to the sirtuin family. Class III subfamily. The cofactor is Zn(2+).

Its subcellular location is the cytoplasm. The enzyme catalyses N(6)-acetyl-L-lysyl-[protein] + NAD(+) + H2O = 2''-O-acetyl-ADP-D-ribose + nicotinamide + L-lysyl-[protein]. It carries out the reaction N(6)-succinyl-L-lysyl-[protein] + NAD(+) + H2O = 2''-O-succinyl-ADP-D-ribose + nicotinamide + L-lysyl-[protein]. It catalyses the reaction N(6)-(2-hydroxyisobutanoyl)-L-lysyl-[protein] + NAD(+) + H2O = 2''-O-(2-hydroxyisobutanoyl)-ADP-D-ribose + nicotinamide + L-lysyl-[protein]. Its function is as follows. NAD-dependent lysine deacetylase that specifically removes acetyl groups on target proteins. Also acts as a protein-lysine deacylase by mediating protein desuccinylation and de-2-hydroxyisobutyrylation. Modulates the activities of several proteins which are inactive in their acylated form. The chain is NAD-dependent protein deacylase from Shigella flexneri.